Here is a 932-residue protein sequence, read N- to C-terminus: Isoleucine--tRNA ligase (932 aa).

The 'HIGH' region motif lies at 58-68 (PYANGDIHIGH). Residue glutamate 559 coordinates L-isoleucyl-5'-AMP. A 'KMSKS' region motif is present at residues 600–604 (KMSKS). ATP is bound at residue lysine 603. Zn(2+) contacts are provided by cysteine 895, cysteine 898, cysteine 915, and cysteine 918.

It belongs to the class-I aminoacyl-tRNA synthetase family. IleS type 1 subfamily. Monomer. Requires Zn(2+) as cofactor.

It is found in the cytoplasm. It catalyses the reaction tRNA(Ile) + L-isoleucine + ATP = L-isoleucyl-tRNA(Ile) + AMP + diphosphate. In terms of biological role, catalyzes the attachment of isoleucine to tRNA(Ile). As IleRS can inadvertently accommodate and process structurally similar amino acids such as valine, to avoid such errors it has two additional distinct tRNA(Ile)-dependent editing activities. One activity is designated as 'pretransfer' editing and involves the hydrolysis of activated Val-AMP. The other activity is designated 'posttransfer' editing and involves deacylation of mischarged Val-tRNA(Ile). The sequence is that of Isoleucine--tRNA ligase from Saccharophagus degradans (strain 2-40 / ATCC 43961 / DSM 17024).